The chain runs to 185 residues: MISVNDFKTGLTIEVDNGIWQVMEFQHVKPGKGAAFVRSKLRNLRTGAVQEKTFRAGEKVSKAHIENRRMQYLYASGDVHTFMDNETFEQLELSTAQIEHELKFLKENMEVHVISYQGETLGVEVPNTVELTVTETEPGIKGDTASGGTKPATLETGLTVQVPFFVNEGDVLVIDTRSGDYVSRA.

Belongs to the elongation factor P family.

The protein localises to the cytoplasm. It functions in the pathway protein biosynthesis; polypeptide chain elongation. Involved in peptide bond synthesis. Stimulates efficient translation and peptide-bond synthesis on native or reconstituted 70S ribosomes in vitro. Probably functions indirectly by altering the affinity of the ribosome for aminoacyl-tRNA, thus increasing their reactivity as acceptors for peptidyl transferase. This chain is Elongation factor P, found in Halalkalibacterium halodurans (strain ATCC BAA-125 / DSM 18197 / FERM 7344 / JCM 9153 / C-125) (Bacillus halodurans).